Here is a 332-residue protein sequence, read N- to C-terminus: NH(3)-dependent NAD(+) synthetase (332 aa).

Position 48-55 (48-55 (GLSGGVDS)) interacts with ATP. Asp54 serves as a coordination point for Mg(2+). Arg184 serves as a coordination point for deamido-NAD(+). Thr204 lines the ATP pocket. Glu209 serves as a coordination point for Mg(2+). Deamido-NAD(+) contacts are provided by Lys217 and Asp224. Residues Lys233 and Thr255 each coordinate ATP.

The protein belongs to the NAD synthetase family. Homodimer.

The catalysed reaction is deamido-NAD(+) + NH4(+) + ATP = AMP + diphosphate + NAD(+) + H(+). It functions in the pathway cofactor biosynthesis; NAD(+) biosynthesis; NAD(+) from deamido-NAD(+) (ammonia route): step 1/1. Catalyzes the ATP-dependent amidation of deamido-NAD to form NAD. Uses ammonia as a nitrogen source. The sequence is that of NH(3)-dependent NAD(+) synthetase from Rhizobium rhizogenes (strain K84 / ATCC BAA-868) (Agrobacterium radiobacter).